A 184-amino-acid chain; its full sequence is GTP cyclohydrolase 1 (184 aa).

Residues Cys75, His78, and Cys146 each coordinate Zn(2+).

This sequence belongs to the GTP cyclohydrolase I family. As to quaternary structure, homomer.

The enzyme catalyses GTP + H2O = 7,8-dihydroneopterin 3'-triphosphate + formate + H(+). Its pathway is cofactor biosynthesis; 7,8-dihydroneopterin triphosphate biosynthesis; 7,8-dihydroneopterin triphosphate from GTP: step 1/1. The chain is GTP cyclohydrolase 1 from Teredinibacter turnerae (strain ATCC 39867 / T7901).